Reading from the N-terminus, the 86-residue chain is Large ribosomal subunit protein bL31 (86 aa).

The segment at 65-86 is disordered; sequence YGMGSADSATSKETKESKKSDK. Basic and acidic residues predominate over residues 74 to 86; it reads TSKETKESKKSDK.

The protein belongs to the bacterial ribosomal protein bL31 family. Type A subfamily. Part of the 50S ribosomal subunit.

Functionally, binds the 23S rRNA. The sequence is that of Large ribosomal subunit protein bL31 from Prochlorococcus marinus subsp. pastoris (strain CCMP1986 / NIES-2087 / MED4).